We begin with the raw amino-acid sequence, 546 residues long: Cysteine--tRNA ligase (546 aa).

Residue Cys-57 coordinates Zn(2+). The short motif at 59–69 (ATVQSSPHIGH) is the 'HIGH' region element. Residues 211-236 (PSVDATGADKYNPVDPADASPDKHDP) are disordered. Zn(2+)-binding residues include Cys-270, His-295, and Glu-299. The 'KMSKS' region signature appears at 326–330 (KMSKS). Position 329 (Lys-329) interacts with ATP.

The protein belongs to the class-I aminoacyl-tRNA synthetase family. As to quaternary structure, monomer. It depends on Zn(2+) as a cofactor.

The protein resides in the cytoplasm. The catalysed reaction is tRNA(Cys) + L-cysteine + ATP = L-cysteinyl-tRNA(Cys) + AMP + diphosphate. The sequence is that of Cysteine--tRNA ligase from Bifidobacterium longum (strain NCC 2705).